Consider the following 522-residue polypeptide: Glucans biosynthesis protein G (522 aa).

Residues 1-33 form the signal peptide; sequence MLDNKFGFKQRVASLRWLSAAIMLSVSAVPAWA.

This sequence belongs to the OpgD/OpgG family.

It is found in the periplasm. Its pathway is glycan metabolism; osmoregulated periplasmic glucan (OPG) biosynthesis. Functionally, involved in the biosynthesis of osmoregulated periplasmic glucans (OPGs). The sequence is that of Glucans biosynthesis protein G from Pectobacterium atrosepticum (strain SCRI 1043 / ATCC BAA-672) (Erwinia carotovora subsp. atroseptica).